A 160-amino-acid chain; its full sequence is Putative 4-hydroxy-4-methyl-2-oxoglutarate aldolase (160 aa).

Substrate is bound by residues 76–79 (GDMI) and R98. D99 provides a ligand contact to a divalent metal cation.

It belongs to the class II aldolase/RraA-like family. Homotrimer. A divalent metal cation is required as a cofactor.

It catalyses the reaction 4-hydroxy-4-methyl-2-oxoglutarate = 2 pyruvate. The catalysed reaction is oxaloacetate + H(+) = pyruvate + CO2. In terms of biological role, catalyzes the aldol cleavage of 4-hydroxy-4-methyl-2-oxoglutarate (HMG) into 2 molecules of pyruvate. Also contains a secondary oxaloacetate (OAA) decarboxylase activity due to the common pyruvate enolate transition state formed following C-C bond cleavage in the retro-aldol and decarboxylation reactions. This Alcanivorax borkumensis (strain ATCC 700651 / DSM 11573 / NCIMB 13689 / SK2) protein is Putative 4-hydroxy-4-methyl-2-oxoglutarate aldolase.